Reading from the N-terminus, the 160-residue chain is Protransforming growth factor alpha (160 aa).

The signal sequence occupies residues M1 to L23. The propeptide at E24–A39 is removed in mature form. The Extracellular segment spans residues E24–Q98. N25 carries N-linked (GlcNAc...) asparagine glycosylation. Residues H43–E83 enclose the EGF-like domain. 3 cysteine pairs are disulfide-bonded: C47–C60, C55–C71, and C73–C82. Positions V90–V160 are cleaved as a propeptide — removed in mature form. Residues A99–C124 form a helical membrane-spanning segment. The Cytoplasmic portion of the chain corresponds to Q125–V160. Residues C153 and C154 are each lipidated (S-palmitoyl cysteine).

In terms of assembly, interacts with the PDZ domains of MAGI3, SDCBP and SNTA1. The interaction with SDCBP, is required for the targeting to the cell surface. In the endoplasmic reticulum, in its immature form (i.e. with a prosegment and lacking full N-glycosylation), interacts with CNIH. In the Golgi apparatus, may form a complex with CNIH and GORASP2. Interacts (via cytoplasmic C-terminal domain) with NKD2. In terms of tissue distribution, isoform 1, isoform 3 and isoform 4 are expressed in keratinocytes and tumor-derived cell lines.

The protein localises to the secreted. It is found in the extracellular space. Its subcellular location is the cell membrane. Its function is as follows. TGF alpha is a mitogenic polypeptide that is able to bind to the EGF receptor/EGFR and to act synergistically with TGF beta to promote anchorage-independent cell proliferation in soft agar. This Homo sapiens (Human) protein is Protransforming growth factor alpha (TGFA).